The following is a 187-amino-acid chain: Ribonuclease M5 (187 aa).

The Toprim domain occupies 5 to 88 (KEVIVVEGKD…AFLPRKAGVP (84 aa)). Mg(2+) is bound by residues E11, D57, and D59.

It belongs to the ribonuclease M5 family. Requires Mg(2+) as cofactor.

Its subcellular location is the cytoplasm. The catalysed reaction is Endonucleolytic cleavage of RNA, removing 21 and 42 nucleotides, respectively, from the 5'- and 3'-termini of a 5S-rRNA precursor.. Its function is as follows. Required for correct processing of both the 5' and 3' ends of 5S rRNA precursor. Cleaves both sides of a double-stranded region yielding mature 5S rRNA in one step. The sequence is that of Ribonuclease M5 from Lactiplantibacillus plantarum (strain ATCC BAA-793 / NCIMB 8826 / WCFS1) (Lactobacillus plantarum).